Reading from the N-terminus, the 365-residue chain is MDNVQEHDPDTQEHNNETQNHKQEDHSNSYQTRTIPFIEPLSREYQKRIILCQTVNGPCPIIALSNALILKSNVDRPFELPKKRYITPDELTEYLVEFAKAYGLCKNQQSLQDKLTSMHFGQQLNPCLYDIEKFEYGHEIFCTFGVRLVHGWILSDDMGLSDEDLSYLRKLEYYEKVADTFAERRSLLEMQEPLTEQQQDFLNNSTCVDKVMENRYTMQFLTNAGLKKILELVGPGEIVVVFRSSHFSTMYSNPDSFAQFTLVTDSGYARTGEDVVWETFDSQTVETGNGELCAANFIPAVYVLNQRKEEKKKRAKDDEQYAKRLAKEEEERGKKETPKKASNTPRRNKSNTQKSRKQSENCLIS.

2 stretches are compositionally biased toward basic and acidic residues: residues 1–27 (MDNV…EDHS) and 315–339 (AKDD…ETPK). Disordered regions lie at residues 1-31 (MDNV…NSYQ) and 308-365 (KEEK…CLIS). A compositionally biased stretch (polar residues) spans 340–353 (KASNTPRRNKSNTQ).

The protein to yeast YGL082w. As to quaternary structure, interacts with sad1.

The protein localises to the cytoplasm. This is an uncharacterized protein from Schizosaccharomyces pombe (strain 972 / ATCC 24843) (Fission yeast).